The sequence spans 336 residues: Phenylalanine--tRNA ligase alpha subunit (336 aa).

Residue Glu-255 coordinates Mg(2+).

Belongs to the class-II aminoacyl-tRNA synthetase family. Phe-tRNA synthetase alpha subunit type 1 subfamily. As to quaternary structure, tetramer of two alpha and two beta subunits. The cofactor is Mg(2+).

It is found in the cytoplasm. It catalyses the reaction tRNA(Phe) + L-phenylalanine + ATP = L-phenylalanyl-tRNA(Phe) + AMP + diphosphate + H(+). This Gemmatimonas aurantiaca (strain DSM 14586 / JCM 11422 / NBRC 100505 / T-27) protein is Phenylalanine--tRNA ligase alpha subunit.